We begin with the raw amino-acid sequence, 192 residues long: Zinc finger CCHC domain-containing protein 10 (192 aa).

The CCHC-type zinc finger occupies 43 to 60; that stretch reads VRCQKCLEFGHWTYECTG. The segment at 89–192 is disordered; the sequence is QSIGETNVER…DEPPKKKKKK (104 aa). 2 stretches are compositionally biased toward low complexity: residues 109–136 and 144–179; these read TSSS…SSSS and SSSS…STDS.

In Homo sapiens (Human), this protein is Zinc finger CCHC domain-containing protein 10 (ZCCHC10).